The primary structure comprises 617 residues: V-type proton ATPase catalytic subunit A (617 aa).

Position 250–257 (250–257 (GAFGCGKT)) interacts with ATP.

This sequence belongs to the ATPase alpha/beta chains family. In terms of assembly, V-ATPase is a heteromultimeric enzyme made up of two complexes: the ATP-hydrolytic V1 complex and the proton translocation V0 complex. The V1 complex consists of three catalytic AB heterodimers that form a heterohexamer, three peripheral stalks each consisting of EG heterodimers, one central rotor including subunits D and F, and the regulatory subunits C and H. The proton translocation complex V0 consists of the proton transport subunit a, a ring of proteolipid subunits c9c'', rotary subunit d, subunits e and f, and the accessory subunits VhaAC45 and ATP6AP2.

It carries out the reaction ATP + H2O + 4 H(+)(in) = ADP + phosphate + 5 H(+)(out). With respect to regulation, ATP hydrolysis occurs at the interface between the nucleotide-binding domains of subunits A and B. ATP hydrolysis triggers a conformational change in the subunits D and F, which induces a shift of subunit d. The c-ring is subsequently rotated and results in a continuous proton translocation across the membrane. In terms of biological role, catalytic subunit of the V1 complex of vacuolar(H+)-ATPase (V-ATPase), a multisubunit enzyme composed of a peripheral complex (V1) that hydrolyzes ATP and a membrane integral complex (V0) that translocates protons. V-ATPase is responsible for acidifying and maintaining the pH of intracellular compartments and in some cell types, is targeted to the plasma membrane, where it is responsible for acidifying the extracellular environment. The sequence is that of V-type proton ATPase catalytic subunit A (VHAA) from Manduca sexta (Tobacco hawkmoth).